The chain runs to 66 residues: Opicalcin-2 (66 aa).

An N-terminal signal peptide occupies residues 1–22 (MKPSLIIVTFIVVFMTISCVAA). A propeptide spanning residues 23–31 (DDEQETWIE) is cleaved from the precursor. Disulfide bonds link Cys36/Cys50, Cys43/Cys54, and Cys49/Cys65. Positions 55 to 57 (KRR) are essential for stimulation of [3H]ryanodine binding to RYR1.

This sequence belongs to the scorpion calcin family. As to expression, expressed by the venom gland.

It localises to the secreted. In terms of biological role, this toxin stabilizes ryanodine receptor 1 (RyR1) opening in a long-lasting subconductance state (40% of the full conductance state). Furthermore, it triggers calcium release from sarcoplasmic vesicles (64.2 nM are enough to induce a sharp release, and 50% of the total calcium is released after toxin (100 nM) addition) probably by acting as a cell-penetrating peptide (CPP). In addition, it has been shown to dose-dependently stimulate ryanodine binding to RyR1 (EC(50)=3.2 nM). It also augments the bell-shaped calcium-[3H]ryanodine binding curve that is maximal at about 10 uM calcium concentration. It binds a different site as ryanodine. It acts synergistically with caffeine. In vivo, intracerebroventricular injection into mice induces neurotoxic symptoms, followed by death. This Opistophthalmus carinatus (African yellow leg scorpion) protein is Opicalcin-2.